The chain runs to 344 residues: Plastoglobule-localized metallopeptidase 48, chloroplastic (344 aa).

The N-terminal 47 residues, 1 to 47 (MAVSVSAPVLSLCYNQSGELSRSLGYRLPKKVGFSSGRRSVSYIGFG), are a transit peptide targeting the chloroplast. Transmembrane regions (helical) follow at residues 102 to 122 (LLGS…SVLV) and 169 to 189 (FIVV…QAVL). His-191 provides a ligand contact to Zn(2+). Glu-192 is an active-site residue. Zn(2+) is bound at residue His-195. Residues 201 to 221 (GVWLTFANILTLGAYTVPAFG) traverse the membrane as a helical segment. Glu-240 is a binding site for Zn(2+). The helical transmembrane segment at 256–272 (VVVSVLMKLAGGCPSIA) threads the bilayer.

This sequence belongs to the peptidase M48 family. M48D subfamily. In terms of assembly, interacts with plastoglobule (PG) core proteins ABC1K3, PES1 and CCD4. Requires Zn(2+) as cofactor. Mostly expressed in flowers (e.g. sepals, petals and stamen), seeds, leaves and cotyledons.

Its subcellular location is the plastid. It localises to the chloroplast. The protein resides in the plastoglobule. It is found in the chloroplast membrane. Metalloendopeptidase with a Zn-dependent proteolytic activity and substrate cleavage upstream of hydrophobic residues. Positive regulator of senescence, probably by degrading CCD4, thus participating in the controlled removal of carotenoids from the thylakoid membrane during the senescence process. This chain is Plastoglobule-localized metallopeptidase 48, chloroplastic, found in Arabidopsis thaliana (Mouse-ear cress).